The chain runs to 404 residues: Acetate kinase (404 aa).

Asn-7 serves as a coordination point for Mg(2+). Lys-14 provides a ligand contact to ATP. Arg-95 lines the substrate pocket. Residue Asp-152 is the Proton donor/acceptor of the active site. ATP-binding positions include 212 to 216, 286 to 288, and 334 to 338; these read HLGNG, DMR, and GIGEN. Position 388 (Glu-388) interacts with Mg(2+).

This sequence belongs to the acetokinase family. In terms of assembly, homodimer. The cofactor is Mg(2+). Requires Mn(2+) as cofactor.

It localises to the cytoplasm. The catalysed reaction is acetate + ATP = acetyl phosphate + ADP. It functions in the pathway metabolic intermediate biosynthesis; acetyl-CoA biosynthesis; acetyl-CoA from acetate: step 1/2. Functionally, catalyzes the formation of acetyl phosphate from acetate and ATP. Can also catalyze the reverse reaction. This chain is Acetate kinase, found in Nitratidesulfovibrio vulgaris (strain DSM 19637 / Miyazaki F) (Desulfovibrio vulgaris).